A 191-amino-acid chain; its full sequence is UPF0149 protein VC_2476 (191 aa).

Belongs to the UPF0149 family.

This Vibrio cholerae serotype O1 (strain ATCC 39315 / El Tor Inaba N16961) protein is UPF0149 protein VC_2476.